The sequence spans 386 residues: Dual-specificity RNA methyltransferase RlmN (386 aa).

The active-site Proton acceptor is the Glu96. Residues 102–340 (ENDRATLCVS…VITRRTRGED (239 aa)) enclose the Radical SAM core domain. A disulfide bridge connects residues Cys109 and Cys345. 3 residues coordinate [4Fe-4S] cluster: Cys116, Cys120, and Cys123. S-adenosyl-L-methionine contacts are provided by residues 170–171 (GE), Ser202, 224–226 (SIH), and Asn302. The active-site S-methylcysteine intermediate is Cys345.

It belongs to the radical SAM superfamily. RlmN family. It depends on [4Fe-4S] cluster as a cofactor.

Its subcellular location is the cytoplasm. It carries out the reaction adenosine(2503) in 23S rRNA + 2 reduced [2Fe-2S]-[ferredoxin] + 2 S-adenosyl-L-methionine = 2-methyladenosine(2503) in 23S rRNA + 5'-deoxyadenosine + L-methionine + 2 oxidized [2Fe-2S]-[ferredoxin] + S-adenosyl-L-homocysteine. It catalyses the reaction adenosine(37) in tRNA + 2 reduced [2Fe-2S]-[ferredoxin] + 2 S-adenosyl-L-methionine = 2-methyladenosine(37) in tRNA + 5'-deoxyadenosine + L-methionine + 2 oxidized [2Fe-2S]-[ferredoxin] + S-adenosyl-L-homocysteine. Functionally, specifically methylates position 2 of adenine 2503 in 23S rRNA and position 2 of adenine 37 in tRNAs. m2A2503 modification seems to play a crucial role in the proofreading step occurring at the peptidyl transferase center and thus would serve to optimize ribosomal fidelity. The polypeptide is Dual-specificity RNA methyltransferase RlmN (Colwellia psychrerythraea (strain 34H / ATCC BAA-681) (Vibrio psychroerythus)).